The primary structure comprises 439 residues: tRNA modification GTPase MnmE (439 aa).

Residues arginine 26, glutamate 88, and arginine 127 each coordinate (6S)-5-formyl-5,6,7,8-tetrahydrofolate. Residues 220–367 (GARLALIGRP…LRDAIHTALI (148 aa)) enclose the TrmE-type G domain. Asparagine 230 contributes to the K(+) binding site. Residues 230–235 (NAGKSS), 249–255 (TPIPGTT), and 274–277 (DTAG) each bind GTP. Serine 234 provides a ligand contact to Mg(2+). Residues threonine 249, isoleucine 251, and threonine 254 each coordinate K(+). Threonine 255 serves as a coordination point for Mg(2+). Residue lysine 439 coordinates (6S)-5-formyl-5,6,7,8-tetrahydrofolate.

The protein belongs to the TRAFAC class TrmE-Era-EngA-EngB-Septin-like GTPase superfamily. TrmE GTPase family. As to quaternary structure, homodimer. Heterotetramer of two MnmE and two MnmG subunits. Requires K(+) as cofactor.

It localises to the cytoplasm. Exhibits a very high intrinsic GTPase hydrolysis rate. Involved in the addition of a carboxymethylaminomethyl (cmnm) group at the wobble position (U34) of certain tRNAs, forming tRNA-cmnm(5)s(2)U34. This chain is tRNA modification GTPase MnmE, found in Deinococcus geothermalis (strain DSM 11300 / CIP 105573 / AG-3a).